Here is a 455-residue protein sequence, read N- to C-terminus: Golgi pH regulator (455 aa).

2 helical membrane-spanning segments follow: residues 5-25 (IDSS…WLFF) and 46-66 (VTFA…LGVL). Asparagine 67 carries N-linked (GlcNAc...) asparagine glycosylation. The next 3 helical transmembrane spans lie at 79–99 (LCVI…YFVV), 111–131 (LFAC…GDPF), and 150–170 (VGVI…VNCP). Residues asparagine 180 and asparagine 243 are each glycosylated (N-linked (GlcNAc...) asparagine). The next 4 membrane-spanning stretches (helical) occupy residues 290-310 (GYFF…NIVF), 343-363 (ISFI…LITL), 378-398 (VIVL…VLLI), and 425-445 (WFDV…YLAH).

The protein belongs to the Golgi pH regulator (TC 1.A.38) family. In terms of assembly, homotrimer.

Its subcellular location is the golgi apparatus membrane. The catalysed reaction is iodide(out) = iodide(in). It catalyses the reaction chloride(in) = chloride(out). The enzyme catalyses bromide(in) = bromide(out). It carries out the reaction fluoride(in) = fluoride(out). Functionally, voltage-gated channel that enables the transfer of anions such as iodide, chloride, bromide and fluoride which may function in counter-ion conductance and participates in Golgi acidification. This chain is Golgi pH regulator, found in Gallus gallus (Chicken).